A 757-amino-acid polypeptide reads, in one-letter code: Polymeric immunoglobulin receptor (757 aa).

Positions 1–18 (MSRLFLACLLAIFPVVSM) are cleaved as a signal peptide. Residues 19 to 126 (KSPIFGPEEV…RGLNFDVSLE (108 aa)) form the Ig-like V-type 1; required for binding to polymeric IgA and IgM domain. At 19–632 (KSPIFGPEEV…TGYSGSSKAL (614 aa)) the chain is on the extracellular side. 7 disulfides stabilise this stretch: Cys40–Cys110, Cys56–Cys64, Cys152–Cys220, Cys257–Cys324, Cys271–Cys279, Cys370–Cys440, and Cys384–Cys394. Asn83 carries N-linked (GlcNAc...) asparagine glycosylation. 4 consecutive Ig-like V-type domains span residues 145–237 (GRTV…DLQV), 250–341 (RSSV…VQAW), 353–457 (ASPS…LKVV), and 461–560 (PSLK…VYVA). Asn420 and Asn468 each carry an N-linked (GlcNAc...) asparagine glycan. 3 cysteine pairs are disulfide-bonded: Cys481–Cys543, Cys485–Cys519, and Cys495–Cys502. The disordered stretch occupies residues 607 to 627 (KDAAGGPGAPADPGRPTGYSG). The helical transmembrane segment at 633–653 (VSTLVPLALVLVAGVVAIGVV) threads the bilayer. Topologically, residues 654-757 (RARHRKNVDR…AATQNGPTEA (104 aa)) are cytoplasmic. Phosphoserine occurs at positions 665, 674, 681, and 727. A compositionally biased stretch (basic and acidic residues) spans 679 to 688 (ENSRDFEGRD). Positions 679 to 730 (ENSRDFEGRDNMGASPEAQETSLGGKDEFATTTEDTVESKEPKKAKRSSKEE) are disordered.

In terms of assembly, interacts (mainly via CDR1-like domain) with dimeric IgA. Interacts (mainly via CDR2-like domain) with pentameric IgM. Either free or part of the secretory IgA (sIgA) complex that consists of two, four or five IgA monomers, and two additional non-Ig polypeptides, namely the JCHAIN and the secretory component (the proteolytic product of PIGR). Free secretory component interacts with bacterial antigens toxA of C.difficile and eae of E.coli. In the absence of dimeric IgA, Ser-727 is phosphorylated which allows PIGR to function normally. Post-translationally, N-glycosylated. N-glycosylation is required for anchoring IgA molecules to mucus, but is not necessary for Ig binding. As to expression, found in mammary gland, jejunum, lung, kidney and small intestine.

The protein localises to the cell membrane. It is found in the secreted. Functionally, mediates selective transcytosis of polymeric IgA and IgM across mucosal epithelial cells. Binds polymeric IgA and IgM at the basolateral surface of epithelial cells. The complex is then transported across the cell to be secreted at the apical surface. During this process, a cleavage occurs that separates the extracellular (known as the secretory component) from the transmembrane segment. Its function is as follows. Through its N-linked glycans ensures anchoring of secretory IgA (sIgA) molecules to mucus lining the epithelial surface to neutralize extracellular pathogens. On its own (free form) may act as a non-specific microbial scavenger to prevent pathogen interaction with epithelial cells. This is Polymeric immunoglobulin receptor (PIGR) from Bos taurus (Bovine).